A 338-amino-acid chain; its full sequence is 1-aminocyclopropane-1-carboxylate deaminase (338 aa).

Position 51 is an N6-(pyridoxal phosphate)lysine (Lys51). The active-site Nucleophile is Ser78.

It belongs to the ACC deaminase/D-cysteine desulfhydrase family. As to quaternary structure, homotrimer. Pyridoxal 5'-phosphate is required as a cofactor.

The enzyme catalyses 1-aminocyclopropane-1-carboxylate + H2O = 2-oxobutanoate + NH4(+). Catalyzes a cyclopropane ring-opening reaction, the irreversible conversion of 1-aminocyclopropane-1-carboxylate (ACC) to ammonia and alpha-ketobutyrate. Allows growth on ACC as a nitrogen source. This Ralstonia pickettii (strain 12J) protein is 1-aminocyclopropane-1-carboxylate deaminase.